The following is a 644-amino-acid chain: Macrolide export ATP-binding/permease protein MacB (644 aa).

The ABC transporter domain occupies 7 to 245 (IELQDITRSF…IPETDQNGRR (239 aa)). 43–50 (GPSGSGKS) serves as a coordination point for ATP. 4 helical membrane-spanning segments follow: residues 271–291 (ALTL…LAIG), 526–546 (IAAI…LVSV), 570–590 (FLTE…VIGI), and 607–627 (LLPM…FGFL).

Belongs to the ABC transporter superfamily. Macrolide exporter (TC 3.A.1.122) family. As to quaternary structure, homodimer. Part of the tripartite efflux system MacAB-TolC, which is composed of an inner membrane transporter, MacB, a periplasmic membrane fusion protein, MacA, and an outer membrane component, TolC. The complex forms a large protein conduit and can translocate molecules across both the inner and outer membranes. Interacts with MacA.

It localises to the cell inner membrane. Its function is as follows. Part of the tripartite efflux system MacAB-TolC. MacB is a non-canonical ABC transporter that contains transmembrane domains (TMD), which form a pore in the inner membrane, and an ATP-binding domain (NBD), which is responsible for energy generation. Confers resistance against macrolides. The sequence is that of Macrolide export ATP-binding/permease protein MacB from Marinobacter nauticus (strain ATCC 700491 / DSM 11845 / VT8) (Marinobacter aquaeolei).